A 293-amino-acid chain; its full sequence is Thiamine-monophosphate kinase (293 aa).

Residues Glu-25, Val-39, Asp-40, Asp-68, and Asp-113 each contribute to the Mg(2+) site. Residues 112 to 113 and Arg-136 each bind ATP; that span reads GD. Residue Asp-194 coordinates Mg(2+). Ser-196 serves as a coordination point for ATP. Residue Asp-197 participates in Mg(2+) binding. Positions 243 and 286 each coordinate substrate.

The protein belongs to the thiamine-monophosphate kinase family. In terms of assembly, homodimer.

The catalysed reaction is thiamine phosphate + ATP = thiamine diphosphate + ADP. Its pathway is cofactor biosynthesis; thiamine diphosphate biosynthesis; thiamine diphosphate from thiamine phosphate: step 1/1. Its activity is regulated as follows. Is inhibited by AMP; the mode of AMP inhibition is uncompetitive for both TMP and ATP. Catalyzes the ATP-dependent phosphorylation of thiamine-monophosphate (TMP) to form thiamine-pyrophosphate (TPP), the active form of vitamin B1. The sequence is that of Thiamine-monophosphate kinase from Pyrobaculum calidifontis (strain DSM 21063 / JCM 11548 / VA1).